We begin with the raw amino-acid sequence, 237 residues long: D-aminoacyl-tRNA deacylase (237 aa).

It belongs to the DtdA deacylase family. As to quaternary structure, monomer. Requires Zn(2+) as cofactor.

The catalysed reaction is a D-aminoacyl-tRNA + H2O = a tRNA + a D-alpha-amino acid + H(+). It carries out the reaction glycyl-tRNA(Ala) + H2O = tRNA(Ala) + glycine + H(+). D-aminoacyl-tRNA deacylase with broad substrate specificity. By recycling D-aminoacyl-tRNA to D-amino acids and free tRNA molecules, this enzyme counteracts the toxicity associated with the formation of D-aminoacyl-tRNA entities in vivo. The polypeptide is D-aminoacyl-tRNA deacylase (Sulfurisphaera tokodaii (strain DSM 16993 / JCM 10545 / NBRC 100140 / 7) (Sulfolobus tokodaii)).